The sequence spans 239 residues: Small ribosomal subunit protein uS2 (239 aa).

The protein belongs to the universal ribosomal protein uS2 family.

The polypeptide is Small ribosomal subunit protein uS2 (Histophilus somni (strain 129Pt) (Haemophilus somnus)).